We begin with the raw amino-acid sequence, 410 residues long: Neuroserpin (410 aa).

Positions 1 to 16 (MAYLGLLSLVALQSLV) are cleaved as a signal peptide. At Ser-83 the chain carries Phosphoserine. N-linked (GlcNAc...) asparagine glycosylation is found at Asn-157, Asn-321, and Asn-401. Ser-403 is a glycosylation site (O-linked (Xyl...) (chondroitin sulfate) serine).

It belongs to the serpin family. Detected in adult pituitary and adrenal gland.

Its subcellular location is the secreted. The protein localises to the cytoplasmic vesicle. It localises to the secretory vesicle lumen. It is found in the perikaryon. Serine protease inhibitor that inhibits plasminogen activators and plasmin but not thrombin. May be involved in the formation or reorganization of synaptic connections as well as for synaptic plasticity in the adult nervous system. May protect neurons from cell damage by tissue-type plasminogen activator. In Rattus norvegicus (Rat), this protein is Neuroserpin (Serpini1).